The following is a 143-amino-acid chain: Late embryogenesis abundant protein 1 (143 aa).

A compositionally biased stretch (low complexity) spans 1-17 (MSSQQNQNRQGEQQEQG). The segment at 1–143 (MSSQQNQNRQ…QAGEKVKGRD (143 aa)) is disordered. Tandem repeats lie at residues 47-57 (KTAEFRDSAGE), 69-79 (KGQEFKERAGE), 80-90 (KAEETKQRAGE), and 91-101 (KMDETKQRAGE). Basic and acidic residues-rich tracts occupy residues 47 to 60 (KTAE…ETIR) and 69 to 143 (KGQE…KGRD). The tract at residues 47 to 101 (KTAEFRDSAGETIRDLTGQAQEKGQEFKERAGEKAEETKQRAGEKMDETKQRAGE) is 4 X 11 AA approximate repeats.

It belongs to the LEA type 4 family.

Its function is as follows. May be involved in defense against water stress. This is Late embryogenesis abundant protein 1 from Aphelenchoides avenae (Mycophagous nematode worm).